A 179-amino-acid polypeptide reads, in one-letter code: GTP-dependent dephospho-CoA kinase (179 aa).

The GTP site is built by D43, V45, D62, E120, and D143.

Belongs to the GTP-dependent DPCK family.

The catalysed reaction is 3'-dephospho-CoA + GTP = GDP + CoA + H(+). The protein operates within cofactor biosynthesis; coenzyme A biosynthesis. In terms of biological role, catalyzes the GTP-dependent phosphorylation of the 3'-hydroxyl group of dephosphocoenzyme A to form coenzyme A (CoA). This chain is GTP-dependent dephospho-CoA kinase, found in Haloarcula marismortui (strain ATCC 43049 / DSM 3752 / JCM 8966 / VKM B-1809) (Halobacterium marismortui).